The following is a 149-amino-acid chain: Transcription antitermination protein NusB (149 aa).

Belongs to the NusB family.

Functionally, involved in transcription antitermination. Required for transcription of ribosomal RNA (rRNA) genes. Binds specifically to the boxA antiterminator sequence of the ribosomal RNA (rrn) operons. The sequence is that of Transcription antitermination protein NusB from Chromobacterium violaceum (strain ATCC 12472 / DSM 30191 / JCM 1249 / CCUG 213 / NBRC 12614 / NCIMB 9131 / NCTC 9757 / MK).